Consider the following 447-residue polypeptide: ATP-dependent protease ATPase subunit HslU (447 aa).

Residues Ile17, 59–64 (GVGKTE), Asp256, Glu321, and Arg393 contribute to the ATP site.

The protein belongs to the ClpX chaperone family. HslU subfamily. A double ring-shaped homohexamer of HslV is capped on each side by a ring-shaped HslU homohexamer. The assembly of the HslU/HslV complex is dependent on binding of ATP.

It is found in the cytoplasm. ATPase subunit of a proteasome-like degradation complex; this subunit has chaperone activity. The binding of ATP and its subsequent hydrolysis by HslU are essential for unfolding of protein substrates subsequently hydrolyzed by HslV. HslU recognizes the N-terminal part of its protein substrates and unfolds these before they are guided to HslV for hydrolysis. The chain is ATP-dependent protease ATPase subunit HslU from Pseudomonas putida (strain W619).